Reading from the N-terminus, the 676-residue chain is Envelope glycoprotein (676 aa).

An N-terminal signal peptide occupies residues 1 to 32; the sequence is MEGLSLLQLPRDKFRKSSFFVWVIILFQKAFS. The Extracellular segment spans residues 33-650; the sequence is MPLGVVTNST…DDNWWTGWRQ (618 aa). N-linked (GlcNAc...) asparagine; by host glycosylation is present at N40. Cystine bridges form between C53–C609, C108–C135, C121–C147, C511–C556, and C601–C608. The segment at 54–201 is receptor-binding; that stretch reads KDHLASTDQL…TFLQSPPIRE (148 aa). N-linked (GlcNAc...) asparagine; by host glycosylation is found at N204, N208, N238, N257, N268, N296, and N314. Residues 305–485 form a mucin-like region region; that stretch reads ELSFETLSLN…STSNGLITST (181 aa). The interval 312 to 351 is disordered; it reads SLNETEDDDATSSRTTKGRISDRATRKYSDLVPKDSPGMV. The segment covering 330-344 has biased composition (basic and acidic residues); it reads RISDRATRKYSDLVP. N-linked (GlcNAc...) asparagine; by host glycosylation is present at N366. Residues 406 to 458 form a disordered region; the sequence is SSSQILSSSPTMAPSPETQTSTTYTPKLPVMTTEEPTTPPRNSPGSTTEAPTL. 2 stretches are compositionally biased toward polar residues: residues 415-430 and 448-458; these read PTMA…TTYT and SPGSTTEAPTL. Residue N463 is glycosylated (N-linked (GlcNAc...) asparagine; by host). The tract at residues 524–539 is fusion peptide; sequence HNAAGIAWIPYFGPGA. A coiled-coil region spans residues 554–595; the sequence is LVCGLRQLANETTQALQLFLRATTELRTYTILNRKAIDFLLR. N-linked (GlcNAc...) asparagine; by host glycosylation occurs at N563. Residues 615 to 634 adopt a coiled-coil conformation; sequence WTKNITDKINQIIHDFIDNP. An N-linked (GlcNAc...) asparagine; by host glycan is attached at N618. A helical transmembrane segment spans residues 651 to 671; sequence WIPAGIGITGIIIAIIALLCV. S-palmitoyl cysteine; by host attachment occurs at residues C670 and C672. At 672–676 the chain is on the cytoplasmic side; it reads CKLLC.

It belongs to the filoviruses glycoprotein family. In terms of assembly, homotrimer; each monomer consists of a GP1 and a GP2 subunit linked by disulfide bonds. The resulting peplomers (GP1,2) protrude from the virus surface as spikes. Interacts with host integrin alpha-V/ITGAV. Interacts with host CLEC10A. Binds also to host CD209 and CLEC4M/DC-SIGN(R). Interacts with host FOLR1. Interacts with BST2; this interaction inhibits the antiviral effect of BST2 and this allows viral release from infected cells. Interacts with host FCN1; this interaction enhances viral entry. Interacts with host TLR4; this interaction induces cell death in T-lymphocytes or proinflammatory cytokines and SOCS1 production in monocytes. Interacts with host entry receptor NPC1. As to quaternary structure, GP1 and GP2delta are part of GP1,2delta soluble complexes released by ectodomain shedding. In terms of processing, the signal peptide region modulates GP's high mannose glycosylation, thereby determining the efficiency of the interactions with DC-SIGN(R). N-glycosylated. Post-translationally, O-glycosylated in the mucin-like region. In terms of processing, palmitoylation of GP2 is not required for its function. Specific enzymatic cleavages in vivo yield mature proteins. The precursor is processed into GP1 and GP2 by host cell furin in the trans Golgi, and maybe by other host proteases, to yield the mature GP1 and GP2 proteins. The cleavage site corresponds to the furin optimal cleavage sequence [KR]-X-[KR]-R. This cleavage does not seem to be required for function. After the internalization of the virus into cell endosomes, GP1 C-terminus is removed by the endosomal proteases cathepsin B, cathepsin L, or both, leaving a 19-kDa N-terminal fragment which is further digested by cathepsin B. Proteolytic processing of GP1,2 by host ADAM17 can remove the transmembrane anchor of GP2 and leads to shedding of complexes consisting in GP1 and truncated GP2 (GP1,2delta).

Its subcellular location is the virion membrane. The protein localises to the host cell membrane. The protein resides in the secreted. Its function is as follows. Trimeric GP1,2 complexes form the virion surface spikes and mediate the viral entry processes, with GP1 acting as the receptor-binding subunit and GP2 as the membrane fusion subunit. At later times of infection, down-regulates the expression of various host cell surface molecules that are essential for immune surveillance and cell adhesion. Down-modulates several integrins including ITGA1, ITGA2, ITGA3, ITGA4, ITGA5, ITGA6, ITGAV and ITGB1. This decrease in cell adhesion molecules may lead to cell detachment, contributing to the disruption of blood vessel integrity and hemorrhages developed during infection (cytotoxicity). Interacts with host TLR4 and thereby stimulates the differentiation and activation of monocytes leading to bystander death of T-lymphocytes. Down-regulates as well the function of host natural killer cells. Counteracts the antiviral effect of host BST2/tetherin that restricts release of progeny virions from infected cells. However, cooperates with VP40 and host BST2 to activate canonical NF-kappa-B pathway in a manner dependent on neddylation. Functions as a decoy for anti-GP1,2 antibodies thereby contributing to viral immune evasion. Interacts and activates host macrophages and dendritic cells inducing up-regulation of cytokine transcription. This effect is mediated throught activation of host TLR4. In terms of biological role, responsible for binding to the receptor(s) on target cells. Interacts with CD209/DC-SIGN and CLEC4M/DC-SIGNR which act as cofactors for virus entry into dendritic cells (DCs) and endothelial cells. Binding to the macrophage specific lectin CLEC10A also seems to enhance virus infectivity. Interaction with FOLR1/folate receptor alpha may be a cofactor for virus entry in some cell types, although results are contradictory. Members of the Tyro3 receptor tyrosine kinase family also seem to be cell entry factors in filovirus infection. Once attached, the virions are internalized through clathrin-dependent endocytosis and/or macropinocytosis. After internalization of the virus into the endosomes of the host cell, proteolysis of GP1 by two cysteine proteases, CTSB/cathepsin B and CTSL/cathepsin L removes the glycan cap and allows GP1 binding to the host entry receptor NPC1. NPC1-binding, Ca(2+) and acidic pH induce a conformational change of GP2, which unmasks its fusion peptide and permit membranes fusion. Functionally, acts as a class I viral fusion protein. Under the current model, the protein has at least 3 conformational states: pre-fusion native state, pre-hairpin intermediate state, and post-fusion hairpin state. During viral and target cell membrane fusion, the coiled coil regions (heptad repeats) assume a trimer-of-hairpins structure, positioning the fusion peptide in close proximity to the C-terminal region of the ectodomain. The formation of this structure appears to drive apposition and subsequent fusion of viral and target cell membranes. Responsible for penetration of the virus into the cell cytoplasm by mediating the fusion of the membrane of the endocytosed virus particle with the endosomal membrane. Low pH in endosomes induces an irreversible conformational change in GP2, releasing the fusion hydrophobic peptide. The protein is Envelope glycoprotein (GP) of Sudan ebolavirus (strain Maleo-79) (SEBOV).